The chain runs to 487 residues: UDP-N-acetylmuramoyl-L-alanyl-D-glutamate--2,6-diaminopimelate ligase (487 aa).

UDP-N-acetyl-alpha-D-muramoyl-L-alanyl-D-glutamate-binding residues include L23 and S25. 108 to 114 (GTNGKTS) is an ATP binding site. UDP-N-acetyl-alpha-D-muramoyl-L-alanyl-D-glutamate contacts are provided by residues 150–151 (TT), S177, Q183, and R185. Residue K217 is modified to N6-carboxylysine. Residues R378, 402-405 (DNPR), G453, and E457 contribute to the meso-2,6-diaminopimelate site. Residues 402–405 (DNPR) carry the Meso-diaminopimelate recognition motif motif.

The protein belongs to the MurCDEF family. MurE subfamily. It depends on Mg(2+) as a cofactor. Post-translationally, carboxylation is probably crucial for Mg(2+) binding and, consequently, for the gamma-phosphate positioning of ATP.

It localises to the cytoplasm. The enzyme catalyses UDP-N-acetyl-alpha-D-muramoyl-L-alanyl-D-glutamate + meso-2,6-diaminopimelate + ATP = UDP-N-acetyl-alpha-D-muramoyl-L-alanyl-gamma-D-glutamyl-meso-2,6-diaminopimelate + ADP + phosphate + H(+). It participates in cell wall biogenesis; peptidoglycan biosynthesis. Its function is as follows. Catalyzes the addition of meso-diaminopimelic acid to the nucleotide precursor UDP-N-acetylmuramoyl-L-alanyl-D-glutamate (UMAG) in the biosynthesis of bacterial cell-wall peptidoglycan. This is UDP-N-acetylmuramoyl-L-alanyl-D-glutamate--2,6-diaminopimelate ligase from Pseudomonas syringae pv. tomato (strain ATCC BAA-871 / DC3000).